Consider the following 238-residue polypeptide: Immunoglobulin superfamily member 6 (238 aa).

A signal peptide spans 1 to 27 (MGPVSTSRRGLRLGISLILLQVGVVGA). Residues 28 to 153 (CTVSVLQPGY…RLFSREVHSL (126 aa)) are Extracellular-facing. The 105-residue stretch at 30–134 (VSVLQPGYLE…EPVPTAKQTG (105 aa)) folds into the Ig-like C2-type domain. Cysteines 51 and 118 form a disulfide. A helical membrane pass occupies residues 154–174 (LIVLLALLAVYVTGVCVIFIV). Over 175-238 (LFRSKSNTPR…RKALPSPGRP (64 aa)) the chain is Cytoplasmic. A compositionally biased stretch (basic and acidic residues) spans 215–230 (ETSHQPEQDGNYENRK). Residues 215 to 238 (ETSHQPEQDGNYENRKALPSPGRP) are disordered.

It is found in the membrane. The sequence is that of Immunoglobulin superfamily member 6 (Igsf6) from Rattus norvegicus (Rat).